The following is a 434-amino-acid chain: Nicotinate phosphoribosyltransferase (434 aa).

The residue at position 242 (His-242) is a Phosphohistidine; by autocatalysis.

Belongs to the NAPRTase family. Transiently phosphorylated on a His residue during the reaction cycle. Phosphorylation strongly increases the affinity for substrates and increases the rate of nicotinate D-ribonucleotide production. Dephosphorylation regenerates the low-affinity form of the enzyme, leading to product release.

It carries out the reaction nicotinate + 5-phospho-alpha-D-ribose 1-diphosphate + ATP + H2O = nicotinate beta-D-ribonucleotide + ADP + phosphate + diphosphate. It functions in the pathway cofactor biosynthesis; NAD(+) biosynthesis; nicotinate D-ribonucleotide from nicotinate: step 1/1. In terms of biological role, catalyzes the synthesis of beta-nicotinate D-ribonucleotide from nicotinate and 5-phospho-D-ribose 1-phosphate at the expense of ATP. In Allorhizobium ampelinum (strain ATCC BAA-846 / DSM 112012 / S4) (Agrobacterium vitis (strain S4)), this protein is Nicotinate phosphoribosyltransferase.